Consider the following 145-residue polypeptide: uncharacterized protein (145 aa).

This sequence to B.subtilis XkdJ.

This is an uncharacterized protein from Bacillus subtilis (strain 168).